A 112-amino-acid polypeptide reads, in one-letter code: Elongin-C (112 aa).

The protein belongs to the SKP1 family. As to quaternary structure, heterotrimer of an A (ELOA, ELOA2 or ELOA3P), ELOB and ELOC subunit. The elongin BC complex interacts with EPOP; leading to recruit the elongin BC complex to Polycomb group (PcG) target genes, thereby restricting excessive activity of the PRC2/EED-EZH2 complex. Component of multiple cullin-RING E3 ubiquitin-protein ligase complexes composed of Elongin BC (ELOB and ELOC), a cullin (CUL2 or CUL5), a catalytic subunit (RBX1 or RNF7/RBX2), as well as a substrate adapter protein that can be either ASB2, ASB9, ASB11, KLHDC2, KLHDC3, KLHDC10, APPBP2, FEM1A, FEM1B, FEM1C, LRR1, PCMTD1, SOCS1, SOCS2, SOCS5, SPSB1, SPSB3, ELOA, VHL, WSB1, ZYG11B or RAB40C. Interacts with TMF1. As part of the Elongin BC E3 ubiquitin ligase complex; interacts with NRBP1. May form oligomers as a KLHDC2/KLHDC3-ELOB-ELOC complex; this interaction is autoinhibitory for the E3 ligase complex as the substrate-binding site of KLHDC2/KLHDC3 is blocked in the oligomer. Ubiquitinated by the DCX(AMBRA1) complex, leading to its degradation by the proteasome.

The protein resides in the nucleus. Its pathway is protein modification; protein ubiquitination. Functionally, SIII, also known as elongin, is a general transcription elongation factor that increases the RNA polymerase II transcription elongation past template-encoded arresting sites. Subunit A is transcriptionally active and its transcription activity is strongly enhanced by binding to the dimeric complex of the SIII regulatory subunits B and C (elongin BC complex). In embryonic stem cells, the elongin BC complex is recruited by EPOP to Polycomb group (PcG) target genes in order generate genomic region that display both active and repressive chromatin properties, an important feature of pluripotent stem cells. In terms of biological role, core component of multiple cullin-RING-based ECS (ElonginB/C-CUL2/5-SOCS-box protein) E3 ubiquitin-protein ligase complexes, which mediate the ubiquitination of target proteins. By binding to BC-box motifs it seems to link target recruitment subunits, like VHL and members of the SOCS box family, to Cullin/RBX1 modules that activate E2 ubiquitination enzymes. Component the von Hippel-Lindau ubiquitination complex CBC(VHL). A number of ECS complexes (containing either KLHDC2, KLHDC3, KLHDC10, APPBP2, FEM1A, FEM1B or FEM1C as substrate-recognition component) are part of the DesCEND (destruction via C-end degrons) pathway, which recognizes a C-degron located at the extreme C terminus of target proteins, leading to their ubiquitination and degradation. The ECS(ASB9) complex mediates ubiquitination and degradation of CKB. As part of a multisubunit ubiquitin ligase complex, polyubiquitinates monoubiquitinated POLR2A. ECS(LRR1) ubiquitinates MCM7 and promotes CMG replisome disassembly by VCP and chromatin extraction during S-phase. As part of the ECS(RAB40C) complex, mediates ANKRD28 ubiquitination and degradation, thereby inhibiting protein phosphatase 6 (PP6) complex activity and focal adhesion assembly during cell migration. The chain is Elongin-C (ELOC) from Bos taurus (Bovine).